The sequence spans 117 residues: Iron-sulfur cluster insertion protein ErpA (117 aa).

Iron-sulfur cluster contacts are provided by Cys45, Cys109, and Cys111.

Belongs to the HesB/IscA family. In terms of assembly, homodimer. Iron-sulfur cluster is required as a cofactor.

Its function is as follows. Required for insertion of 4Fe-4S clusters for at least IspG. This Saccharophagus degradans (strain 2-40 / ATCC 43961 / DSM 17024) protein is Iron-sulfur cluster insertion protein ErpA.